Reading from the N-terminus, the 314-residue chain is tRNA pseudouridine synthase B (314 aa).

Residue H43 coordinates substrate. D48 serves as the catalytic Nucleophile. Residues Y76, Y179, and L200 each coordinate substrate.

The protein belongs to the pseudouridine synthase TruB family. Type 1 subfamily.

The catalysed reaction is uridine(55) in tRNA = pseudouridine(55) in tRNA. Functionally, responsible for synthesis of pseudouridine from uracil-55 in the psi GC loop of transfer RNAs. This chain is tRNA pseudouridine synthase B, found in Escherichia coli O139:H28 (strain E24377A / ETEC).